Consider the following 582-residue polypeptide: ATP-dependent lipid A-core flippase (582 aa).

Transmembrane regions (helical) follow at residues 16-36 (LWPT…ALIL), 63-83 (VLVW…ITSY), 153-173 (IIGL…ILIV), 253-273 (PIIQ…ASFP), and 275-295 (VMDN…IALM). One can recognise an ABC transmembrane type-1 domain in the interval 28-310 (IVAGVALILN…LTNVNAQFQR (283 aa)). In terms of domain architecture, ABC transporter spans 342-578 (VEFRNVTFTY…RGVYAQLHKM (237 aa)). 376–383 (GRSGSGKS) contacts ATP.

It belongs to the ABC transporter superfamily. Lipid exporter (TC 3.A.1.106) family. As to quaternary structure, homodimer.

The protein resides in the cell inner membrane. It carries out the reaction ATP + H2O + lipid A-core oligosaccharideSide 1 = ADP + phosphate + lipid A-core oligosaccharideSide 2.. Involved in lipopolysaccharide (LPS) biosynthesis. Translocates lipid A-core from the inner to the outer leaflet of the inner membrane. Transmembrane domains (TMD) form a pore in the inner membrane and the ATP-binding domain (NBD) is responsible for energy generation. The protein is ATP-dependent lipid A-core flippase of Shigella flexneri.